A 188-amino-acid chain; its full sequence is Peptidyl-tRNA hydrolase (188 aa).

Y14 is a binding site for tRNA. H19 acts as the Proton acceptor in catalysis. The tRNA site is built by Y64, N66, and N113.

The protein belongs to the PTH family. In terms of assembly, monomer.

It localises to the cytoplasm. It carries out the reaction an N-acyl-L-alpha-aminoacyl-tRNA + H2O = an N-acyl-L-amino acid + a tRNA + H(+). Its function is as follows. Hydrolyzes ribosome-free peptidyl-tRNAs (with 1 or more amino acids incorporated), which drop off the ribosome during protein synthesis, or as a result of ribosome stalling. Catalyzes the release of premature peptidyl moieties from peptidyl-tRNA molecules trapped in stalled 50S ribosomal subunits, and thus maintains levels of free tRNAs and 50S ribosomes. This is Peptidyl-tRNA hydrolase from Chloroflexus aggregans (strain MD-66 / DSM 9485).